Here is a 388-residue protein sequence, read N- to C-terminus: Chorismate synthase (388 aa).

2 residues coordinate NADP(+): arginine 39 and arginine 45. Residues 132–134 (RSS), 251–252 (NA), glycine 296, 311–315 (KPIPT), and arginine 337 each bind FMN.

This sequence belongs to the chorismate synthase family. In terms of assembly, homotetramer. FMNH2 is required as a cofactor.

The catalysed reaction is 5-O-(1-carboxyvinyl)-3-phosphoshikimate = chorismate + phosphate. Its pathway is metabolic intermediate biosynthesis; chorismate biosynthesis; chorismate from D-erythrose 4-phosphate and phosphoenolpyruvate: step 7/7. Its function is as follows. Catalyzes the anti-1,4-elimination of the C-3 phosphate and the C-6 proR hydrogen from 5-enolpyruvylshikimate-3-phosphate (EPSP) to yield chorismate, which is the branch point compound that serves as the starting substrate for the three terminal pathways of aromatic amino acid biosynthesis. This reaction introduces a second double bond into the aromatic ring system. The protein is Chorismate synthase of Staphylococcus aureus (strain bovine RF122 / ET3-1).